A 192-amino-acid chain; its full sequence is Ion-translocating oxidoreductase complex subunit A (192 aa).

A run of 6 helical transmembrane segments spans residues 5–25 (LLLL…FLGL), 38–58 (AIGM…LSFL), 72–92 (LRTM…EMLV), 102–122 (ALGI…VALL), 134–154 (AIYG…FSAM), and 171–191 (AIAM…AGLI).

Belongs to the NqrDE/RnfAE family. As to quaternary structure, the complex is composed of six subunits: RnfA, RnfB, RnfC, RnfD, RnfE and RnfG.

The protein localises to the cell inner membrane. Functionally, part of a membrane-bound complex that couples electron transfer with translocation of ions across the membrane. The sequence is that of Ion-translocating oxidoreductase complex subunit A from Shewanella denitrificans (strain OS217 / ATCC BAA-1090 / DSM 15013).